The sequence spans 159 residues: Ribosomal RNA large subunit methyltransferase H (159 aa).

S-adenosyl-L-methionine-binding positions include Leu-76, Gly-108, and 127–132 (FSKMTF).

It belongs to the RNA methyltransferase RlmH family. As to quaternary structure, homodimer.

It localises to the cytoplasm. It catalyses the reaction pseudouridine(1915) in 23S rRNA + S-adenosyl-L-methionine = N(3)-methylpseudouridine(1915) in 23S rRNA + S-adenosyl-L-homocysteine + H(+). Specifically methylates the pseudouridine at position 1915 (m3Psi1915) in 23S rRNA. The chain is Ribosomal RNA large subunit methyltransferase H from Shouchella clausii (strain KSM-K16) (Alkalihalobacillus clausii).